The sequence spans 712 residues: Polyphosphate kinase (712 aa).

Asn-49 contributes to the ATP binding site. 2 residues coordinate Mg(2+): Arg-398 and Arg-428. His-458 serves as the catalytic Phosphohistidine intermediate. ATP-binding residues include Tyr-491, Arg-587, and His-615.

The protein belongs to the polyphosphate kinase 1 (PPK1) family. Mg(2+) serves as cofactor. Post-translationally, an intermediate of this reaction is the autophosphorylated ppk in which a phosphate is covalently linked to a histidine residue through a N-P bond.

It carries out the reaction [phosphate](n) + ATP = [phosphate](n+1) + ADP. Catalyzes the reversible transfer of the terminal phosphate of ATP to form a long-chain polyphosphate (polyP). This Prochlorococcus marinus (strain MIT 9313) protein is Polyphosphate kinase.